The chain runs to 185 residues: Photosystem I assembly protein Ycf4 (185 aa).

3 helical membrane passes run 22-42, 57-77, and 101-121; these read FFFASIILGGALGFLLVGFSS, ILFVPQGIVMCFYGIAGLFFS, and FYVFFAGVSQGKIVVFFLRVP.

Belongs to the Ycf4 family.

The protein resides in the plastid. It localises to the chloroplast thylakoid membrane. Seems to be required for the assembly of the photosystem I complex. This chain is Photosystem I assembly protein Ycf4, found in Gnetum parvifolium (Small-leaved jointfir).